We begin with the raw amino-acid sequence, 896 residues long: DNA mismatch repair protein MutS (896 aa).

ATP is bound at residue 638 to 645; that stretch reads GPNMSGKS.

Belongs to the DNA mismatch repair MutS family.

This protein is involved in the repair of mismatches in DNA. It is possible that it carries out the mismatch recognition step. This protein has a weak ATPase activity. The chain is DNA mismatch repair protein MutS from Fusobacterium nucleatum subsp. nucleatum (strain ATCC 25586 / DSM 15643 / BCRC 10681 / CIP 101130 / JCM 8532 / KCTC 2640 / LMG 13131 / VPI 4355).